The sequence spans 269 residues: 2' cyclic ADP-D-ribose synthase AbTIR (269 aa).

Positions 31-99 (LKTKLSEISR…KQQKDEIEHQ (69 aa)) form a coiled coil. Positions 133–266 (PEYDLFISHA…EIAHQLADVI (134 aa)) constitute a TIR domain. S143, K172, and K202 together coordinate NAD(+). Residue E208 is part of the active site. NAD(+) is bound at residue K245.

In terms of assembly, homodimer. In the presence of NAD(+) analog 8-amino-isoquinoline adenine dinucleotide (3AD) forms filaments with 3AD between monomers; conformational changes occur upon 3AD binding.

The catalysed reaction is NAD(+) = 2'cADPR + nicotinamide + H(+). The enzyme catalyses NAD(+) + H2O = ADP-D-ribose + nicotinamide + H(+). It carries out the reaction NADP(+) + H2O = ADP-D-ribose 2'-phosphate + nicotinamide + H(+). Functionally, NAD(+) hydrolase (NADase) that catalyzes cleavage of NAD(+) into ADP-D-ribose (ADPR) and nicotinamide. In addition to ADPR, also generates a cyclization variant of cyclic ADPR (cADPR), termed 2'cADPR (v-cADPR). Cleaves NADP(+), but does not cyclize the product. The chain is 2' cyclic ADP-D-ribose synthase AbTIR from Acinetobacter baumannii (strain 1295743).